The sequence spans 927 residues: Phosphoenolpyruvate carboxylase (927 aa).

Residues His-160 and Lys-589 contribute to the active site.

It belongs to the PEPCase type 1 family. The cofactor is Mg(2+).

The catalysed reaction is oxaloacetate + phosphate = phosphoenolpyruvate + hydrogencarbonate. Functionally, forms oxaloacetate, a four-carbon dicarboxylic acid source for the tricarboxylic acid cycle. This chain is Phosphoenolpyruvate carboxylase, found in Rhodopseudomonas palustris (strain BisA53).